Here is an 83-residue protein sequence, read N- to C-terminus: Short neurotoxin C (83 aa).

An N-terminal signal peptide occupies residues 1 to 21 (MKTLLLTLVVVTMVCLDLAYT). Disulfide bonds link C24-C45, C38-C62, C64-C75, and C76-C81.

Belongs to the three-finger toxin family. Short-chain subfamily. Type I alpha-neurotoxin sub-subfamily. Expressed by the venom gland.

It localises to the secreted. Binds to muscle nicotinic acetylcholine receptor (nAChR) and inhibit acetylcholine from binding to the receptor, thereby impairing neuromuscular transmission. The protein is Short neurotoxin C of Laticauda colubrina (Yellow-lipped sea krait).